Consider the following 286-residue polypeptide: NAD kinase (286 aa).

Residue aspartate 74 is the Proton acceptor of the active site. NAD(+) is bound by residues 74 to 75, 148 to 149, aspartate 178, alanine 186, 189 to 194, and glutamine 244; these read DG, ND, and TAYNLS.

This sequence belongs to the NAD kinase family. A divalent metal cation is required as a cofactor.

It is found in the cytoplasm. The catalysed reaction is NAD(+) + ATP = ADP + NADP(+) + H(+). In terms of biological role, involved in the regulation of the intracellular balance of NAD and NADP, and is a key enzyme in the biosynthesis of NADP. Catalyzes specifically the phosphorylation on 2'-hydroxyl of the adenosine moiety of NAD to yield NADP. The sequence is that of NAD kinase from Campylobacter jejuni (strain RM1221).